The chain runs to 280 residues: Elongation factor 1-delta (280 aa).

Alanine 2 is modified (N-acetylalanine). Lysine 17 is modified (N6-acetyllysine). Phosphoserine occurs at positions 37, 44, 60, 86, and 106. An N6-acetyllysine modification is found at lysine 107. The segment at 113 to 171 is disordered; that stretch reads SALEKSSPAHRATTPQTQHVSPMRQVEPPSRKAATATEDDEDDDIDLFGSDEEEDKEAT. Lysine 117 carries the N6-acetyllysine; alternate modification. The residue at position 117 (lysine 117) is an N6-succinyllysine; alternate. A Phosphoserine modification is found at serine 119. Threonine 129 bears the Phosphothreonine mark. Serine 133 carries the post-translational modification Phosphoserine. Threonine 147 carries the phosphothreonine modification. Acidic residues predominate over residues 149–168; that stretch reads TEDDEDDDIDLFGSDEEEDK. Serine 162 carries the post-translational modification Phosphoserine; by CK2.

This sequence belongs to the EF-1-beta/EF-1-delta family. As to quaternary structure, EF-1 is composed of 4 subunits: alpha, beta, delta, and gamma.

In terms of biological role, EF-1-beta and EF-1-delta stimulate the exchange of GDP bound to EF-1-alpha to GTP. The polypeptide is Elongation factor 1-delta (EEF1D) (Bos taurus (Bovine)).